We begin with the raw amino-acid sequence, 48 residues long: Probable antitoxin PhoAT (48 aa).

The protein belongs to the PhoAT antitoxin family. As to quaternary structure, interacts with toxin PhoH2.

Functionally, probable antitoxin component of a type II toxin-antitoxin (TA) system. The probable cognate antitoxin is PhoAT; the toxin gene can be expressed in the absence of the antitoxin gene in M.smegmatis strain mc(2)155. This chain is Probable antitoxin PhoAT, found in Mycolicibacterium smegmatis (strain ATCC 700084 / mc(2)155) (Mycobacterium smegmatis).